Reading from the N-terminus, the 872-residue chain is G-type lectin S-receptor-like serine/threonine-protein kinase At5g24080 (872 aa).

A signal peptide spans 1–25 (MSSFHFYFPSVGLFSFFCFFLVSLA). Residues 26–472 (TEPHIGLGSK…SRKSHGLRQK (447 aa)) are Extracellular-facing. The Bulb-type lectin domain occupies 30-149 (IGLGSKLKAS…EVTAGPTIWQ (120 aa)). N-linked (GlcNAc...) asparagine glycosylation is found at Asn-49, Asn-117, Asn-208, Asn-219, Asn-261, and Asn-294. Residues 306–344 (VSNPCDIAGICGNGVCNLDRTKKNADCLCLPGSVKLPDQ) form the EGF-like; atypical domain. 2 disulfides stabilise this stretch: Cys-310-Cys-321 and Cys-316-Cys-332. Asn-353, Asn-367, and Asn-390 each carry an N-linked (GlcNAc...) asparagine glycan. A PAN domain is found at 360–447 (CESNINRNGS…PGSTLFVKTR (88 aa)). 2 disulfide bridges follow: Cys-400–Cys-424 and Cys-404–Cys-410. 2 N-linked (GlcNAc...) asparagine glycosylation sites follow: Asn-449 and Asn-459. A helical transmembrane segment spans residues 473-493 (VLVIPIVVGMLVLVALLGMLL). Residues 494-872 (YYNLDRKRTL…TCSYSSMSPR (379 aa)) are Cytoplasmic-facing. Thr-521 is modified (phosphothreonine). One can recognise a Protein kinase domain in the interval 530-810 (NNFSQLLGSG…LEGTSDEINL (281 aa)). ATP contacts are provided by residues 536-544 (LGSGGFGTV) and Lys-558. Residue Tyr-603 is modified to Phosphotyrosine. The tract at residues 619 to 637 (EQTANLLDWRTRFEIAVAT) is caM-binding. Asp-656 acts as the Proton acceptor in catalysis. A phosphothreonine mark is found at Thr-690 and Thr-695.

The protein belongs to the protein kinase superfamily. Ser/Thr protein kinase family.

Its subcellular location is the cell membrane. The enzyme catalyses L-seryl-[protein] + ATP = O-phospho-L-seryl-[protein] + ADP + H(+). It carries out the reaction L-threonyl-[protein] + ATP = O-phospho-L-threonyl-[protein] + ADP + H(+). The polypeptide is G-type lectin S-receptor-like serine/threonine-protein kinase At5g24080 (Arabidopsis thaliana (Mouse-ear cress)).